The sequence spans 128 residues: Small ribosomal subunit protein uS11 (128 aa).

Belongs to the universal ribosomal protein uS11 family. In terms of assembly, part of the 30S ribosomal subunit. Interacts with proteins S7 and S18. Binds to IF-3.

Located on the platform of the 30S subunit, it bridges several disparate RNA helices of the 16S rRNA. Forms part of the Shine-Dalgarno cleft in the 70S ribosome. The sequence is that of Small ribosomal subunit protein uS11 from Synechococcus sp. (strain JA-2-3B'a(2-13)) (Cyanobacteria bacterium Yellowstone B-Prime).